We begin with the raw amino-acid sequence, 2475 residues long: Non-reducing polyketide synthase ausA (2475 aa).

The segment at 14–253 (VLFGSKYSEI…HHADHLSAAQ (240 aa)) is N-terminal acylcarrier protein transacylase domain (SAT). In terms of domain architecture, Ketosynthase family 3 (KS3) spans 384–800 (SIPIAVTGLA…GSNAAIVLKE (417 aa)). Active-site for beta-ketoacyl synthase activity residues include cysteine 549, histidine 684, and histidine 723. The segment at 910–1212 (LCFGGQTGNK…CPMDLSGPQA (303 aa)) is malonyl-CoA:ACP transacylase (MAT) domain. Serine 997 functions as the For acyl/malonyl transferase activity in the catalytic mechanism. The N-terminal hotdog fold stretch occupies residues 1279–1407 (EDLKLVQLLK…GTISLSPGAD (129 aa)). The PKS/mFAS DH domain maps to 1279–1586 (EDLKLVQLLK…FTSVSIQSLR (308 aa)). The interval 1282-1585 (KLVQLLKNEG…TFTSVSIQSL (304 aa)) is product template (PT) domain. Histidine 1312 serves as the catalytic Proton acceptor; for dehydratase activity. The interval 1435–1586 (SSSGLKRSTV…FTSVSIQSLR (152 aa)) is C-terminal hotdog fold. The active-site Proton donor; for dehydratase activity is aspartate 1493. The 78-residue stretch at 1626–1703 (SSNGDDLRTV…ALVQRIFPGR (78 aa)) folds into the Carrier domain. Residue serine 1663 is modified to O-(pantetheine 4'-phosphoryl)serine. A methyltransferase (CMeT) domain region spans residues 1865 to 2098 (QHTSEHKLLH…GFNWVDWTDN (234 aa)). Residues 2127-2475 (SAIHEETVVY…YEFLRSHVGL (349 aa)) form a thioesterase (TE) domain region. Active-site for thioesterase activity residues include serine 2250, aspartate 2412, and histidine 2444.

The enzyme catalyses 3 malonyl-CoA + acetyl-CoA + 2 S-adenosyl-L-methionine = 3,5-dimethylorsellinate + 2 S-adenosyl-L-homocysteine + 3 CO2 + 4 CoA. It participates in secondary metabolite biosynthesis; terpenoid biosynthesis. Functionally, non-reducing polyketide synthase; part of the gene cluster A that mediates the biosynthesis of the fungal meroterpenoid acetoxydehydroaustin. The first step of the pathway is the synthesis of 3,5-dimethylorsellinic acid by the polyketide synthase ausA. 3,5-dimethylorsellinic acid is then prenylated by the polyprenyl transferase ausN. Further epoxidation by the FAD-dependent monooxygenase ausM and cyclization by the probable terpene cyclase ausL lead to the formation of protoaustinoid A. Protoaustinoid A is then oxidized to spiro-lactone preaustinoid A3 by the combined action of the FAD-binding monooxygenases ausB and ausC, and the dioxygenase ausE. Acid-catalyzed keto-rearrangement and ring contraction of the tetraketide portion of preaustinoid A3 by ausJ lead to the formation of preaustinoid A4. The aldo-keto reductase ausK, with the help of ausH, is involved in the next step by transforming preaustinoid A4 into isoaustinone which is in turn hydroxylated by the P450 monooxygenase ausI to form austinolide. The cytochrome P450 monooxygenase ausG then modifies austinolide to austinol. Austinol is further acetylated to austin by the O-acetyltransferase ausP, which spontaneously changes to dehydroaustin. The cytochrome P450 monooxygenase then converts dehydroaustin is into 7-dehydrodehydroaustin. The hydroxylation catalyzed by ausR permits the second O-acetyltransferase ausQ to add an additional acetyl group to the molecule, leading to the formation of acetoxydehydroaustin. Due to genetic rearrangements of the clusters and the subsequent loss of some enzymes, the end product of the Penicillium brasilianum austinoid biosynthesis clusters is acetoxydehydroaustin. In Penicillium brasilianum, this protein is Non-reducing polyketide synthase ausA.